The sequence spans 150 residues: Dynein light chain Tctex-type protein 2B (150 aa).

This sequence belongs to the dynein light chain Tctex-type family.

It is found in the dynein axonemal particle. Functionally, acts as one of several non-catalytic accessory components of the cytoplasmic dynein 2 complex (dynein-2 complex), a motor protein complex that drives the movement of cargos along microtubules within cilia and flagella in concert with the intraflagellar transport (IFT) system. Required for proper retrograde ciliary transport. The chain is Dynein light chain Tctex-type protein 2B (dynlt2b) from Danio rerio (Zebrafish).